The sequence spans 339 residues: Holliday junction branch migration complex subunit RuvB (339 aa).

Positions 1–180 (MTRTITPDMT…FGVISRLEFY (180 aa)) are large ATPase domain (RuvB-L). Residues leucine 19, arginine 20, glycine 61, lysine 64, threonine 65, threonine 66, 127–129 (EDF), arginine 170, tyrosine 180, and arginine 217 each bind ATP. Position 65 (threonine 65) interacts with Mg(2+). A small ATPAse domain (RuvB-S) region spans residues 181-251 (TIEELAFIIT…VVQDALALLE (71 aa)). The head domain (RuvB-H) stretch occupies residues 254-339 (HMGFDYMDRM…EPPQGKLFQD (86 aa)). Residues arginine 309 and arginine 314 each coordinate DNA.

Belongs to the RuvB family. Homohexamer. Forms an RuvA(8)-RuvB(12)-Holliday junction (HJ) complex. HJ DNA is sandwiched between 2 RuvA tetramers; dsDNA enters through RuvA and exits via RuvB. An RuvB hexamer assembles on each DNA strand where it exits the tetramer. Each RuvB hexamer is contacted by two RuvA subunits (via domain III) on 2 adjacent RuvB subunits; this complex drives branch migration. In the full resolvosome a probable DNA-RuvA(4)-RuvB(12)-RuvC(2) complex forms which resolves the HJ.

Its subcellular location is the cytoplasm. It carries out the reaction ATP + H2O = ADP + phosphate + H(+). In terms of biological role, the RuvA-RuvB-RuvC complex processes Holliday junction (HJ) DNA during genetic recombination and DNA repair, while the RuvA-RuvB complex plays an important role in the rescue of blocked DNA replication forks via replication fork reversal (RFR). RuvA specifically binds to HJ cruciform DNA, conferring on it an open structure. The RuvB hexamer acts as an ATP-dependent pump, pulling dsDNA into and through the RuvAB complex. RuvB forms 2 homohexamers on either side of HJ DNA bound by 1 or 2 RuvA tetramers; 4 subunits per hexamer contact DNA at a time. Coordinated motions by a converter formed by DNA-disengaged RuvB subunits stimulates ATP hydrolysis and nucleotide exchange. Immobilization of the converter enables RuvB to convert the ATP-contained energy into a lever motion, pulling 2 nucleotides of DNA out of the RuvA tetramer per ATP hydrolyzed, thus driving DNA branch migration. The RuvB motors rotate together with the DNA substrate, which together with the progressing nucleotide cycle form the mechanistic basis for DNA recombination by continuous HJ branch migration. Branch migration allows RuvC to scan DNA until it finds its consensus sequence, where it cleaves and resolves cruciform DNA. The polypeptide is Holliday junction branch migration complex subunit RuvB (Geotalea daltonii (strain DSM 22248 / JCM 15807 / FRC-32) (Geobacter daltonii)).